Reading from the N-terminus, the 860-residue chain is Leucine--tRNA ligase (860 aa).

The short motif at 42–52 is the 'HIGH' region element; it reads PYPSGRLHMGH. Residues 619–623 carry the 'KMSKS' region motif; it reads KMSKS. K622 is a binding site for ATP.

This sequence belongs to the class-I aminoacyl-tRNA synthetase family.

It is found in the cytoplasm. The enzyme catalyses tRNA(Leu) + L-leucine + ATP = L-leucyl-tRNA(Leu) + AMP + diphosphate. This Escherichia coli O127:H6 (strain E2348/69 / EPEC) protein is Leucine--tRNA ligase.